We begin with the raw amino-acid sequence, 248 residues long: PF03932 family protein CutC (248 aa).

Belongs to the CutC family.

It is found in the cytoplasm. In Photorhabdus laumondii subsp. laumondii (strain DSM 15139 / CIP 105565 / TT01) (Photorhabdus luminescens subsp. laumondii), this protein is PF03932 family protein CutC.